Here is a 287-residue protein sequence, read N- to C-terminus: Probable glucose uptake protein GlcU (287 aa).

Transmembrane regions (helical) follow at residues 7–29 (LIALLPALFWGSVVIINVFVGGG), 34–56 (IRGTTLGTLFIGFSLLATGHAAF), 58–75 (NLTVIIVGLVSGALWAFG), 114–136 (WSTIVQVVMGLIAMILLVVGISL), 156–178 (MGILLLSTIGYVGYVVLGDIFGV), 183–202 (ALFFQSIGMAIGGLILSMNH), 209–228 (TALNLIPGVIWGIGNLFMFY), 233–255 (VGVATSFSLSQLLVIVSTLGGIF), and 267–286 (IGIWSGIIVIVIASIILGNL).

It belongs to the GRP transporter (TC 2.A.7.5) family.

It localises to the cell membrane. Involved in the uptake of glucose. The protein is Probable glucose uptake protein GlcU (glcU) of Staphylococcus epidermidis (strain ATCC 35984 / DSM 28319 / BCRC 17069 / CCUG 31568 / BM 3577 / RP62A).